We begin with the raw amino-acid sequence, 1029 residues long: Sodium/potassium-transporting ATPase subunit alpha-4 (1029 aa).

Residues 1-37 (MGLWGKKGTVAPHDQSPRRRPKKGLIKKKMVKREKQK) are disordered. The Cytoplasmic segment spans residues 1-95 (MGLWGKKGTV…NTVTPPPTTP (95 aa)). Residues 18–36 (RRRPKKGLIKKKMVKREKQ) show a composition bias toward basic residues. The tract at residues 90–92 (PPP) is interaction with phosphoinositide-3 kinase. The chain crosses the membrane as a helical span at residues 96–116 (EWVKFCKQLFGGFSLLLWTGA). Over 117-139 (ILCFVAYSIQIYFNEEPTKDNLY) the chain is Extracellular. The chain crosses the membrane as a helical span at residues 140 to 160 (LSIVLSVVVIVTGCFSYYQEA). Topologically, residues 161 to 296 (KSSKIMESFK…VGQTPIAAEI (136 aa)) are cytoplasmic. The segment covering 223–237 (NSSLTGESEPQSRSP) has biased composition (polar residues). The interval 223–242 (NSSLTGESEPQSRSPDFTHE) is disordered. Residues 297–316 (EHFIHLITVVAVFLGVTFFA) traverse the membrane as a helical segment. Topologically, residues 317 to 328 (LSLLLGYGWLEA) are extracellular. A helical transmembrane segment spans residues 329–346 (IIFLIGIIVANVPEGLLA). Residues 347–778 (TVTVCLTLTA…EEGRLIFDNL (432 aa)) lie on the Cytoplasmic side of the membrane. Residue Asp-384 is the 4-aspartylphosphate intermediate of the active site. Mg(2+) is bound by residues Asp-723 and Asp-727. Residues 779–798 (KKSIMYTLTSNIPEITPFLM) form a helical membrane-spanning segment. Residues 799 to 808 (FIILGIPLPL) lie on the Extracellular side of the membrane. The chain crosses the membrane as a helical span at residues 809 to 829 (GTITILCIDLGTDMVPAISLA). The Cytoplasmic segment spans residues 830-849 (YESAESDIMKRLPRNPKTDN). The helical transmembrane segment at 850–872 (LVNHRLIGMAYGQIGMIQALAGF) threads the bilayer. At 873–924 (FTYFVILAENGFRPVDLLGIRLHWEDKYLNDLEDSYGQQWTYEQRKVVEFTC) the chain is on the extracellular side. The helical transmembrane segment at 925 to 944 (QTAFFVTIVVVQWADLIISK) threads the bilayer. Residues 945-957 (TRRNSLFQQGMRN) lie on the Cytoplasmic side of the membrane. Position 949 is a phosphoserine; by PKA (Ser-949). The helical transmembrane segment at 958–976 (KVLIFGILEETLLAAFLSY) threads the bilayer. Residues 977-991 (TPGMDVALRMYPLKI) are Extracellular-facing. A helical membrane pass occupies residues 992-1012 (TWWLCAIPYSILIFVYDEIRK). Residues 1013–1029 (LLIRQHPDGWVERETYY) lie on the Cytoplasmic side of the membrane.

Belongs to the cation transport ATPase (P-type) (TC 3.A.3) family. Type IIC subfamily. In terms of assembly, the sodium/potassium-transporting ATPase is composed of a catalytic alpha subunit, an auxiliary non-catalytic beta subunit and an additional regulatory subunit. In terms of tissue distribution, specifically expressed in testis. Found in very low levels in skeletal muscle. Expressed in mature sperm (at protein level).

The protein resides in the cell membrane. The enzyme catalyses K(+)(out) + Na(+)(in) + ATP + H2O = K(+)(in) + Na(+)(out) + ADP + phosphate + H(+). With respect to regulation, specifically inhibited by an endogenous cardiac glycoside, ouabain. Functionally, this is the catalytic component of the active enzyme, which catalyzes the hydrolysis of ATP coupled with the exchange of sodium and potassium ions across the plasma membrane. This action creates the electrochemical gradient of sodium and potassium ions, providing the energy for active transport of various nutrients. Plays a role in sperm motility. The chain is Sodium/potassium-transporting ATPase subunit alpha-4 from Homo sapiens (Human).